A 448-amino-acid chain; its full sequence is Ribosomal protein uS12 methylthiotransferase RimO (448 aa).

Residues 16 to 126 (PRISFVSLGC…VVAAVHEAVP (111 aa)) enclose the MTTase N-terminal domain. Positions 25, 61, 90, 157, 161, and 164 each coordinate [4Fe-4S] cluster. The Radical SAM core domain occupies 143-380 (LTPRHYAYLK…MEAQAGVSLK (238 aa)). The 66-residue stretch at 383–448 (RAKVGKRLQV…DAYDLHGIAV (66 aa)) folds into the TRAM domain.

Belongs to the methylthiotransferase family. RimO subfamily. Requires [4Fe-4S] cluster as cofactor.

Its subcellular location is the cytoplasm. It carries out the reaction L-aspartate(89)-[ribosomal protein uS12]-hydrogen + (sulfur carrier)-SH + AH2 + 2 S-adenosyl-L-methionine = 3-methylsulfanyl-L-aspartate(89)-[ribosomal protein uS12]-hydrogen + (sulfur carrier)-H + 5'-deoxyadenosine + L-methionine + A + S-adenosyl-L-homocysteine + 2 H(+). Its function is as follows. Catalyzes the methylthiolation of an aspartic acid residue of ribosomal protein uS12. The polypeptide is Ribosomal protein uS12 methylthiotransferase RimO (Methylorubrum populi (strain ATCC BAA-705 / NCIMB 13946 / BJ001) (Methylobacterium populi)).